We begin with the raw amino-acid sequence, 99 residues long: CLAVATA3/ESR (CLE)-related protein 17 (99 aa).

Positions 1 to 21 (MTHVLVRRQGQGKKRRWDVNM) are cleaved as a signal peptide. Positions 77–89 (LSRDDIYGDDKRV) are enriched in basic and acidic residues. A disordered region spans residues 77–99 (LSRDDIYGDDKRVVHTGPNPLHN). Proline 94 is modified (hydroxyproline). Residue proline 94 is glycosylated (O-linked (Ara...) hydroxyproline).

This sequence belongs to the CLV3/ESR signal peptide family. In terms of processing, the O-glycosylation (arabinosylation) of the hydroxyproline Pro-94 enhances binding affinity of the CLE17p peptide for its receptor. Mostly expressed in seedlings, roots, flowers, stems and apex, and, to a lower extent, in leaves and siliques.

The protein resides in the secreted. The protein localises to the extracellular space. In terms of biological role, extracellular signal peptide that regulates cell fate. Represses root apical meristem maintenance. Regulates the transition of protophloem cells from proliferation to differentiation, thus impinging on postembryonic growth capacity of the root meristem; this signaling pathway requires CRN and CLV2. This is CLAVATA3/ESR (CLE)-related protein 17 from Arabidopsis thaliana (Mouse-ear cress).